The chain runs to 420 residues: uncharacterized protein (420 aa).

2 disordered regions span residues 84-103 (RSQA…GTSE) and 122-211 (SMNN…NKKS). Polar residues predominate over residues 85–103 (SQANSESTPPEHTWSGTSE). The span at 184–199 (SMTDQEVEQRRKEANK) shows a compositional bias: basic and acidic residues. 2 coiled-coil regions span residues 265–310 (TEKE…TATN) and 345–374 (LQFK…NFKE). Positions 399 to 408 (KTSSPKTSIA) are enriched in polar residues. Positions 399–420 (KTSSPKTSIAGSHRRSTRSSEN) are disordered. Basic residues predominate over residues 410-420 (SHRRSTRSSEN).

This is an uncharacterized protein from Caenorhabditis elegans.